The sequence spans 105 residues: Putative membrane protein insertion efficiency factor (105 aa).

The protein belongs to the UPF0161 family.

The protein localises to the cell membrane. Its function is as follows. Could be involved in insertion of integral membrane proteins into the membrane. This Bifidobacterium longum (strain NCC 2705) protein is Putative membrane protein insertion efficiency factor.